The following is a 524-amino-acid chain: Apoptosis inhibitor 5 (524 aa).

An ARM-like and Heat-like helical repeats region spans residues 2-360 (PTVEELYRNY…HQLGRKLPDF (359 aa)). Residue lysine 251 is modified to N6-acetyllysine. Residues 370-391 (LKDFKIRLQYFARGLQVYIRQL) form a leucine-zipper region. Threonine 399 carries the phosphothreonine modification. Residues 452–524 (GQKRASEDTT…RGNRSRGRLY (73 aa)) form a disordered region. Residues 454-475 (KRASEDTTSGSPPKKSSAGPKR) carry the Nuclear localization signal motif. A phosphoserine mark is found at serine 462, serine 464, and serine 469. Over residues 462-472 (SGSPPKKSSAG) the composition is skewed to low complexity. Positions 487-497 (KYSSNLGNFNY) are enriched in polar residues. Omega-N-methylarginine is present on arginine 500.

The protein belongs to the API5 family. As to quaternary structure, monomer. Interacts with FGF2 and ACIN1. Acetylation at Lys-251 impairs antiapoptotic function. As to expression, expressed in all tissues tested, including heart, brain, placenta, lung, liver, skeletal muscle, kidney and pancreas. Highest levels in heart, pancreas and placenta. Highly expressed in several cancers. Preferentially expressed in squamous cell carcinoma versus adenocarcinoma in non-small cell lung cancer.

It localises to the nucleus. Its subcellular location is the cytoplasm. In terms of biological role, antiapoptotic factor that may have a role in protein assembly. Negatively regulates ACIN1. By binding to ACIN1, it suppresses ACIN1 cleavage from CASP3 and ACIN1-mediated DNA fragmentation. Also known to efficiently suppress E2F1-induced apoptosis. Its depletion enhances the cytotoxic action of the chemotherapeutic drugs. This is Apoptosis inhibitor 5 from Homo sapiens (Human).